The sequence spans 241 residues: Phosphoglycolate phosphatase (241 aa).

Asp8 (nucleophile) is an active-site residue. Residues Asp8, Asp10, and Asp174 each contribute to the Mg(2+) site.

Belongs to the HAD-like hydrolase superfamily. CbbY/CbbZ/Gph/YieH family. Mg(2+) serves as cofactor.

The catalysed reaction is 2-phosphoglycolate + H2O = glycolate + phosphate. Its pathway is organic acid metabolism; glycolate biosynthesis; glycolate from 2-phosphoglycolate: step 1/1. Specifically catalyzes the dephosphorylation of 2-phosphoglycolate. Is involved in the dissimilation of the intracellular 2-phosphoglycolate formed during the DNA repair of 3'-phosphoglycolate ends, a major class of DNA lesions induced by oxidative stress. This chain is Phosphoglycolate phosphatase, found in Rhodospirillum rubrum (strain ATCC 11170 / ATH 1.1.1 / DSM 467 / LMG 4362 / NCIMB 8255 / S1).